Consider the following 308-residue polypeptide: Transcriptional adapter 1-2 (308 aa).

Belongs to the TADA1 family. In terms of assembly, component of the Spt-Ada-Gcn5 acetyltransferase (SAGA) complex consisting of wda/Taf5L, Saf6, Taf9, Taf10b, Taf12, Ada1, Spt3, Spt7, Spt20, Sf3b3, Sf3b5, Nipped-A/Tra1, a histone acetyltransferase (HAT) module made up of Gcn5, Ada2b (Isoform B), Ada3 and Sgf29, and a deubiquitinase (DUB) module made up of not/nonstop, Sgf11 and e(y)2 tethered to SAGA by Atxn7. Not a component of the Ada2a-containing ATAC complex.

The protein resides in the nucleus. Component of the transcription regulatory complex SAGA, a multiprotein complex that activates transcription by remodeling chromatin and mediating histone acetylation and deubiquitination. The SAGA complex predominantly acetylates histone H3. The protein is Transcriptional adapter 1-2 of Drosophila melanogaster (Fruit fly).